Here is a 692-residue protein sequence, read N- to C-terminus: Ena/VASP-like protein (692 aa).

The region spanning 1–112 (MSEQSICQAR…NAMLFALNIM (112 aa)) is the WH1 domain. Disordered stretches follow at residues 116–310 (DGGP…VQKN), 466–518 (SAAM…YEES), and 531–650 (KLRK…NDVS). Polar residues-rich tracts occupy residues 123-132 (RQAQNIQNGP) and 159-169 (STTVSTLQINV). The span at 214–226 (SSKSTNKSSNRTS) shows a compositional bias: low complexity. Residues 231-267 (LQNSHCGSEPSTSQSSAFSPIRPSNGTVSRSIKQISL) are compositionally biased toward polar residues. 2 stretches are compositionally biased toward low complexity: residues 288 to 310 (PSLS…VQKN) and 466 to 479 (SAAM…APAP). Residues 480 to 506 (ASGPPPPPPPGPPPPSGGTPPPAPPLP) show a composition bias toward pro residues. Positions 522–542 (GLAAALAGAKLRKVQRPEDGS) are EVH2 block A. Positions 522-689 (GLAAALAGAK…DAIRQELSRI (168 aa)) are EVH2. A KLKR motif is present at residues 531-534 (KLRK). Positions 563–580 (GGLMEEMNKLLAKRRKAA) are EVH2 block B. Residues 597 to 617 (EDASLSSSPVTRGPTPQNSSD) are compositionally biased toward polar residues. A compositionally biased stretch (basic and acidic residues) spans 618–628 (LGKKPWERSNS). The interval 655-689 (DFDRMKQEILEEVVRELHKVKEEIIDAIRQELSRI) is EVH2 block C.

The protein belongs to the Ena/VASP family. As to expression, during embryonic and tadpole development, expressed in the cement gland, brain, neural tube, myotome and neural placodes, including the otic, lateral line and olfactory placodes. All isoforms show similar spatial expression patterns.

It localises to the cytoplasm. Its subcellular location is the cytoskeleton. The protein localises to the stress fiber. The protein resides in the cell projection. It is found in the lamellipodium. Its function is as follows. Ena/VASP proteins are actin-associated proteins involved in a range of processes dependent on cytoskeleton remodeling and cell polarity such as axon guidance and lamellipodial and filopodial dynamics in migrating cells. Evl enhances actin nucleation and polymerization. This chain is Ena/VASP-like protein, found in Xenopus laevis (African clawed frog).